The chain runs to 258 residues: Short-chain dehydrogenase/reductase olcF (258 aa).

Residues Val-12, Asp-58, and Arg-120 each coordinate NADP(+). The Proton donor role is filled by Ser-138. Positions 152, 156, and 185 each coordinate NADP(+). Residue Tyr-152 is the Proton acceptor of the active site. Catalysis depends on Lys-156, which acts as the Lowers pKa of active site Tyr.

Belongs to the short-chain dehydrogenases/reductases (SDR) family.

Its pathway is secondary metabolite biosynthesis; terpenoid biosynthesis. Short-chain dehydrogenase/reductase; part of the gene cluster that mediates the biosynthesis of 15-deoxyoxalicine B. The first step of the pathway is the synthesis of nicotinyl-CoA from nicotinic acid by the nicotinic acid-CoA ligase olcI. Nicotinyl-CoA is then a substrate of polyketide synthase olcA to produce 4-hydroxy-6-(3-pyridinyl)-2H-pyran-2-one (HPPO) which is further prenylated by the polyprenyl transferase olcH to yield geranylgeranyl-HPPO. Geranylgeranyl pyrophosphate is provided by the cluster-specific geranylgeranyl pyrophosphate synthase olcC. The FAD-dependent monooxygenase olcE catalyzes the epoxidation of geranylgeranyl-HPPO and the terpene cyclase olcD catalyzes the cyclization of the terpenoid component, resulting in the formation of the tricyclic terpene moiety seen in predecaturin E. The cytochrome P450 monooxygenase then catalyzes the allylic oxidation of predecaturin E, which is followed by spirocylization with concomitant loss of one molecule of water to form decaturin E. Decaturin E is the substrate of the cytochrome P450 monooxygenase olcJ which hydroxylates it at the C-29 position to form decaturin F. The short-chain dehydrogenase/reductase olcF may catalyze the oxidation of decaturin F to generate the 29-hydroxyl-27-one intermediate, and subsequent hemiacetal formation probably leads to the formation of decaturin C. The dioxygenase olcK may be a peroxisomal enzyme that catalyzes the hydroxylation of decaturin C into decaturin A once decaturin C is shuttled into the peroxisome by the MFS transporter olcL. Finally the cytochrome P450 monooxygenase olcB catalyzes the oxidative rearrangement to yield 15-deoxyoxalicine B. In the absence of olcJ, decaturin E may be shunted to a pathway in which it is oxidized to a ketone, possibly by olcF, to form decaturin D, which undergoes further allylic oxidation to yield decaturin G. Moreover, in the absence of oclK or oclL, oclB can convert decaturin C into 15-deoxyoxalicine A. The sequence is that of Short-chain dehydrogenase/reductase olcF from Penicillium canescens.